The sequence spans 313 residues: MDVGVSPAKSILAKPLKLLTEEDISQLTREDCRKFLKDKGMRRPSWNKSQAIQQVLSLKALYEPGDDSGAGIFRKILVSQPVNPPRVTTTLIEPSNELEACGRVSYPEDNGACHRMDSPRSAEFSGGSGHFVSEKDGHKTTISPRSPAETSELVGQMTIFYSGKVNVYDGIPPEKARSIMHFAANPIDLPENGIFASSRMISKLISKEKMMELPQKGLEKANSSRDSGMEGQANRKVSLQRYREKRKDRKFSKAKKCPGVASSSLEMFLNCQPRMKAAYSQNLGCTGSPLHSQSPESQTKSPNLSVDLNSEGI.

The tract at residues serine 118 to glutamate 149 is disordered. Positions threonine 150–asparagine 185 constitute a Tify domain. Disordered regions lie at residues lysine 220–lysine 256 and glutamine 281–isoleucine 313. Residues glutamine 232–alanine 254 carry the Jas motif. Positions asparagine 234 to arginine 241 match the Nuclear localization signal motif. Over residues arginine 243–lysine 256 the composition is skewed to basic residues.

It belongs to the TIFY/JAZ family. In terms of assembly, interacts with AFPH2/NINJA.

Its subcellular location is the nucleus. In terms of biological role, regulates the arrest of dispersed meristematic cells during lamina development. The polypeptide is Protein TIFY 4A (TIFY4A) (Arabidopsis thaliana (Mouse-ear cress)).